We begin with the raw amino-acid sequence, 472 residues long: 3-isopropylmalate dehydratase large subunit (472 aa).

The [4Fe-4S] cluster site is built by Cys353, Cys414, and Cys417.

Belongs to the aconitase/IPM isomerase family. LeuC type 1 subfamily. As to quaternary structure, heterodimer of LeuC and LeuD. [4Fe-4S] cluster serves as cofactor.

The enzyme catalyses (2R,3S)-3-isopropylmalate = (2S)-2-isopropylmalate. It participates in amino-acid biosynthesis; L-leucine biosynthesis; L-leucine from 3-methyl-2-oxobutanoate: step 2/4. Its function is as follows. Catalyzes the isomerization between 2-isopropylmalate and 3-isopropylmalate, via the formation of 2-isopropylmaleate. The chain is 3-isopropylmalate dehydratase large subunit from Acinetobacter baumannii (strain ATCC 17978 / DSM 105126 / CIP 53.77 / LMG 1025 / NCDC KC755 / 5377).